The sequence spans 254 residues: MLTRRIIPCLDVTGGRVVKGVQFLELRDAGDPVEIAEAYDLQGADELTFLDITASSDGRDTMVDVVRHTAERVFMPLTVGGGIRVVEDIRRMLNAGADKVSINTAAVSRPEFVNEAAERFGSQCTVVAIDARQVPGEQRWEVYTHGGRKPTGIDAVEWAVRMESYGAGEILLTSMDRDGTKDGYDLALTRAVVDAVSIPVIASGGVGNLEHLYDGFTTAGASACLAASIFHFRQHTVQEAKQYLQGRGVPIRMV.

Residues D11 and D130 contribute to the active site.

This sequence belongs to the HisA/HisF family. As to quaternary structure, heterodimer of HisH and HisF.

It is found in the cytoplasm. The catalysed reaction is 5-[(5-phospho-1-deoxy-D-ribulos-1-ylimino)methylamino]-1-(5-phospho-beta-D-ribosyl)imidazole-4-carboxamide + L-glutamine = D-erythro-1-(imidazol-4-yl)glycerol 3-phosphate + 5-amino-1-(5-phospho-beta-D-ribosyl)imidazole-4-carboxamide + L-glutamate + H(+). Its pathway is amino-acid biosynthesis; L-histidine biosynthesis; L-histidine from 5-phospho-alpha-D-ribose 1-diphosphate: step 5/9. Its function is as follows. IGPS catalyzes the conversion of PRFAR and glutamine to IGP, AICAR and glutamate. The HisF subunit catalyzes the cyclization activity that produces IGP and AICAR from PRFAR using the ammonia provided by the HisH subunit. The protein is Imidazole glycerol phosphate synthase subunit HisF of Trichlorobacter lovleyi (strain ATCC BAA-1151 / DSM 17278 / SZ) (Geobacter lovleyi).